Here is a 449-residue protein sequence, read N- to C-terminus: Polyadenylation factor subunit 2 (449 aa).

WD repeat units lie at residues 77 to 116, 119 to 158, 161 to 200, 203 to 242, 245 to 285, 288 to 328, and 337 to 376; these read KVKH…FESI, AHDS…VKVL, AHTE…QERV, GHHW…NVST, GLKH…RELQ, RDDM…SNST, and AHEK…DPNA. The segment at 411 to 432 is disordered; that stretch reads LPPANETNLGTPQPSILGSESI. Residues 415–432 are compositionally biased toward polar residues; it reads NETNLGTPQPSILGSESI.

It is found in the nucleus. In terms of biological role, required for 3'-end cleavage and polyadenylation of pre-mRNAs. Also involved in chromosome segregation where it has a role in chromosome attachment to the mitotic spindle. This is Polyadenylation factor subunit 2 (PSF2) from Eremothecium gossypii (strain ATCC 10895 / CBS 109.51 / FGSC 9923 / NRRL Y-1056) (Yeast).